The sequence spans 242 residues: Biosynthetic peptidoglycan transglycosylase (242 aa).

Residues 19–39 (LMVVLAVFWGGGIALFSVAPV) traverse the membrane as a helical segment.

Belongs to the glycosyltransferase 51 family.

It is found in the cell inner membrane. It carries out the reaction [GlcNAc-(1-&gt;4)-Mur2Ac(oyl-L-Ala-gamma-D-Glu-L-Lys-D-Ala-D-Ala)](n)-di-trans,octa-cis-undecaprenyl diphosphate + beta-D-GlcNAc-(1-&gt;4)-Mur2Ac(oyl-L-Ala-gamma-D-Glu-L-Lys-D-Ala-D-Ala)-di-trans,octa-cis-undecaprenyl diphosphate = [GlcNAc-(1-&gt;4)-Mur2Ac(oyl-L-Ala-gamma-D-Glu-L-Lys-D-Ala-D-Ala)](n+1)-di-trans,octa-cis-undecaprenyl diphosphate + di-trans,octa-cis-undecaprenyl diphosphate + H(+). The protein operates within cell wall biogenesis; peptidoglycan biosynthesis. Its function is as follows. Peptidoglycan polymerase that catalyzes glycan chain elongation from lipid-linked precursors. In Escherichia coli (strain SMS-3-5 / SECEC), this protein is Biosynthetic peptidoglycan transglycosylase.